A 673-amino-acid chain; its full sequence is DNA ligase (673 aa).

NAD(+) contacts are provided by residues 32-36 (DHVYD), 81-82 (SL), and E111. K113 serves as the catalytic N6-AMP-lysine intermediate. The NAD(+) site is built by R134, E171, K286, and K310. C404, C407, C422, and C428 together coordinate Zn(2+). The BRCT domain occupies 595–673 (NIIDEYKNKT…NEFWKKDNNF (79 aa)).

It belongs to the NAD-dependent DNA ligase family. LigA subfamily. Mg(2+) is required as a cofactor. Mn(2+) serves as cofactor.

The catalysed reaction is NAD(+) + (deoxyribonucleotide)n-3'-hydroxyl + 5'-phospho-(deoxyribonucleotide)m = (deoxyribonucleotide)n+m + AMP + beta-nicotinamide D-nucleotide.. Its function is as follows. DNA ligase that catalyzes the formation of phosphodiester linkages between 5'-phosphoryl and 3'-hydroxyl groups in double-stranded DNA using NAD as a coenzyme and as the energy source for the reaction. It is essential for DNA replication and repair of damaged DNA. The sequence is that of DNA ligase from Ureaplasma urealyticum serovar 10 (strain ATCC 33699 / Western).